The primary structure comprises 410 residues: Maintenance of mitochondrial morphology protein 1 (410 aa).

Residues 1–19 are Lumenal-facing; that stretch reads MTPDSCPVRPEPTLSFTQG. Residues 20 to 40 traverse the membrane as a helical segment; that stretch reads LIVGQISVVFLIAAFIKFFIF. Residues 41–410 are Cytoplasmic-facing; that stretch reads GDPPSAEETA…PMPGSLAVDD (370 aa). Positions 71 to 87 are enriched in polar residues; the sequence is LRTSNQRPGSQQQQSVL. The disordered stretch occupies residues 71-98; that stretch reads LRTSNQRPGSQQQQSVLNRKKSSILRSG. Residues 119-335 enclose the SMP-LTD domain; the sequence is QPESLDWFNV…EPRFQEIPLP (217 aa). Residues 380–410 form a disordered region; sequence ARQAAQRDSLRYRRPRADDAFPMPGSLAVDD. Residues 387 to 398 are compositionally biased toward basic and acidic residues; that stretch reads DSLRYRRPRADD.

Belongs to the MMM1 family. Homodimer. Component of the ER-mitochondria encounter structure (ERMES) or MDM complex, composed of MMM1, MDM10, MDM12 and MDM34. An MMM1 homodimer associates with one molecule of MDM12 on each side in a pairwise head-to-tail manner, and the SMP-LTD domains of MMM1 and MDM12 generate a continuous hydrophobic tunnel for phospholipid trafficking.

It localises to the endoplasmic reticulum membrane. In terms of biological role, component of the ERMES/MDM complex, which serves as a molecular tether to connect the endoplasmic reticulum (ER) and mitochondria. Components of this complex are involved in the control of mitochondrial shape and protein biogenesis, and function in nonvesicular lipid trafficking between the ER and mitochondria. The MDM12-MMM1 subcomplex functions in the major beta-barrel assembly pathway that is responsible for biogenesis of all outer membrane beta-barrel proteins, and acts in a late step after the SAM complex. The MDM10-MDM12-MMM1 subcomplex further acts in the TOM40-specific pathway after the action of the MDM12-MMM1 complex. Essential for establishing and maintaining the structure of mitochondria and maintenance of mtDNA nucleoids. This chain is Maintenance of mitochondrial morphology protein 1, found in Pyricularia oryzae (strain 70-15 / ATCC MYA-4617 / FGSC 8958) (Rice blast fungus).